The chain runs to 76 residues: Liver-expressed antimicrobial peptide 2 (76 aa).

A signal peptide spans 1–22; the sequence is MLQLKLFAVLLTCLLLLGQVNS. Residues 23-36 constitute a propeptide that is removed on maturation; the sequence is SPVPEVSSAKRSRR. 2 cysteine pairs are disulfide-bonded: Cys-53–Cys-64 and Cys-59–Cys-69.

It belongs to the LEAP2 family.

It is found in the secreted. Functionally, has an antimicrobial activity. The chain is Liver-expressed antimicrobial peptide 2 (Leap2) from Mus musculus (Mouse).